Reading from the N-terminus, the 385-residue chain is Acetate kinase (385 aa).

A Mg(2+)-binding site is contributed by asparagine 8. An ATP-binding site is contributed by lysine 15. Substrate is bound at residue arginine 85. Aspartate 142 serves as the catalytic Proton donor/acceptor. ATP contacts are provided by residues 200-204 (HLGNG), 275-277 (DMR), and 323-327 (GIGEN). Glutamate 373 contributes to the Mg(2+) binding site.

The protein belongs to the acetokinase family. As to quaternary structure, homodimer. Mg(2+) is required as a cofactor. Requires Mn(2+) as cofactor.

It is found in the cytoplasm. It catalyses the reaction acetate + ATP = acetyl phosphate + ADP. It participates in metabolic intermediate biosynthesis; acetyl-CoA biosynthesis; acetyl-CoA from acetate: step 1/2. Its function is as follows. Catalyzes the formation of acetyl phosphate from acetate and ATP. Can also catalyze the reverse reaction. This Francisella tularensis subsp. holarctica (strain OSU18) protein is Acetate kinase.